Here is a 195-residue protein sequence, read N- to C-terminus: MSSKEQKTPDEQVLDQKEAAKGQQADAAPETADVADPRDERIAELEAQLSELQQRERDNMLRVRAEADNVRRRAEMDIEKAHKFAVEKFASEMLPVIDNLERALDTADKANESLAAMIEGVELTLKSLLDAVHKFGIEVVGDVGVPFNPEVHQAMTMLPSADHQPNHVMMVMQKGYTLNGRLLRPAMVAVSKAQD.

Residues 1-20 (MSSKEQKTPDEQVLDQKEAA) show a composition bias toward basic and acidic residues. Residues 1 to 40 (MSSKEQKTPDEQVLDQKEAAKGQQADAAPETADVADPRDE) form a disordered region.

It belongs to the GrpE family. In terms of assembly, homodimer.

It localises to the cytoplasm. In terms of biological role, participates actively in the response to hyperosmotic and heat shock by preventing the aggregation of stress-denatured proteins, in association with DnaK and GrpE. It is the nucleotide exchange factor for DnaK and may function as a thermosensor. Unfolded proteins bind initially to DnaJ; upon interaction with the DnaJ-bound protein, DnaK hydrolyzes its bound ATP, resulting in the formation of a stable complex. GrpE releases ADP from DnaK; ATP binding to DnaK triggers the release of the substrate protein, thus completing the reaction cycle. Several rounds of ATP-dependent interactions between DnaJ, DnaK and GrpE are required for fully efficient folding. The chain is Protein GrpE from Pectobacterium atrosepticum (strain SCRI 1043 / ATCC BAA-672) (Erwinia carotovora subsp. atroseptica).